We begin with the raw amino-acid sequence, 340 residues long: Phosphoribosylformylglycinamidine cyclo-ligase (340 aa).

This sequence belongs to the AIR synthase family.

It localises to the cytoplasm. It catalyses the reaction 2-formamido-N(1)-(5-O-phospho-beta-D-ribosyl)acetamidine + ATP = 5-amino-1-(5-phospho-beta-D-ribosyl)imidazole + ADP + phosphate + H(+). It functions in the pathway purine metabolism; IMP biosynthesis via de novo pathway; 5-amino-1-(5-phospho-D-ribosyl)imidazole from N(2)-formyl-N(1)-(5-phospho-D-ribosyl)glycinamide: step 2/2. This chain is Phosphoribosylformylglycinamidine cyclo-ligase, found in Crocosphaera subtropica (strain ATCC 51142 / BH68) (Cyanothece sp. (strain ATCC 51142)).